A 121-amino-acid chain; its full sequence is MANKKIIGNLGEDIALEYLEKLGYTLIERNFKGKKTRGEIDLVMTKGVVIVFIEVKYRRQGSFGYAACSISDRKKKKLYETAEEYLIEKGLSFNQKCSFGAVLIDDTHYNREISFIEDIFI.

The protein belongs to the UPF0102 family.

The protein is UPF0102 protein BHWA1_02005 of Brachyspira hyodysenteriae (strain ATCC 49526 / WA1).